We begin with the raw amino-acid sequence, 810 residues long: Volume-regulated anion channel subunit LRRC8A (810 aa).

An N-acetylmethionine modification is found at Met-1. The Cytoplasmic segment spans residues 1-22 (MIPVTELRYFADTQPAYRILKP). Residues 23–47 (WWDVFTDYISIVMLMIAVFGGTLQV) form a helical membrane-spanning segment. The Extracellular portion of the chain corresponds to 48–123 (TQDKMICLPC…YENRLHWFAK (76 aa)). 3 cysteine pairs are disulfide-bonded: Cys-54/Cys-310, Cys-57/Cys-65, and Cys-113/Cys-295. N-linked (GlcNAc...) asparagine glycosylation is found at Asn-66 and Asn-83. A helical transmembrane segment spans residues 124–142 (YFPYLVLLHTLIFLACSNF). Topologically, residues 143–264 (WFKFPRTSSK…EEGDIVYRLY (122 aa)) are cytoplasmic. The residue at position 200 (Thr-200) is a Phosphothreonine. Ser-202 carries the phosphoserine modification. Thr-215 bears the Phosphothreonine mark. Ser-217 carries the post-translational modification Phosphoserine. A helical transmembrane segment spans residues 265 to 286 (MRQTIIKVIKFALIICYTVYYV). Residues 287–316 (HNIKFDVDCTVDIESLTGYRTYRCAHPLAT) lie on the Extracellular side of the membrane. The chain crosses the membrane as a helical span at residues 317 to 341 (LFKILASFYISLVIFYGLICMYTLW). Residues 342–810 (WMLRRSLKKY…RLWRADKEQA (469 aa)) are Cytoplasmic-facing. LRR repeat units follow at residues 411–422 (WTLDKLRQRLTK), 423–445 (NAQDKLELHLFMLSGIPDTVFDL), 447–468 (ELEVLKLELIPDVTIPPSIAQL), 469–492 (TGLKELWLYHTAAKIEAPALAFLR), 493–515 (ENLRALHIKFTDIKEIPLWIYSL), 518–542 (LEELHLTGNLSAENNRYIVIDGLRE), 543–565 (LKRLKVLRLKSNLSKLPQVVTDV), 567–589 (VHLQKLSINNEGTKLIVLNSLKK), 590–613 (MVNLTELELIRCDLERIPHSIFSL), 614–637 (HNLQEIDLKDNNLKTIEEIISFQH), 639–661 (HRLTCLKLWYNHIAYIPIQIGNL), 662–684 (TNLERLYLNRNKIEKIPTQLFYC), 686–707 (KLRYLDLSHNNLTFLPADIGLL), 708–730 (QNLQNLAVTANRIEALPPELFQC), 732–753 (KLRALHLGNNVLQSLPSRVGEL), 754–776 (TNLTQIELRGNRLECLPVELGEC), and 778–801 (LLKRSGLVVEEDLFSTLPPEVKER). A Di-leucine motif motif is present at residues 706 to 707 (LL).

The protein belongs to the LRRC8 family. In terms of assembly, heterohexamer; oligomerizes with other LRRC8 proteins (LRRC8B, LRRC8C, LRRC8D and/or LRRC8E) to form a heterohexamer. Can form homohexamers in vitro, but these have lower conductance than heterohexamers. In vivo, the subunit composition may depend primarily on expression levels, and heterooligomeric channels containing various proportions of the different LRRC8 proteins may coexist. Interact with GRB2. Interacts with NOX4; this interaction prevents the ubiquitin-mediated degradation of LRRC8A. Post-translationally, N-glycosylated. Ubiquitously expressed. High levels detected in the bone marrow; lower levels found in peripheral blood cells. Highly expressed in pancreatic beta cells.

It localises to the cell membrane. The protein localises to the lysosome membrane. The catalysed reaction is chloride(in) = chloride(out). The enzyme catalyses iodide(out) = iodide(in). It catalyses the reaction taurine(out) = taurine(in). It carries out the reaction L-aspartate(out) = L-aspartate(in). The catalysed reaction is L-glutamate(out) = L-glutamate(in). The enzyme catalyses myo-inositol(out) = myo-inositol(in). It catalyses the reaction 2',3'-cGAMP(out) = 2',3'-cGAMP(in). With respect to regulation, inhibited by (4-[(2-butyl-6,7-dichloro-2-cyclopentyl-2,3-dihydro-1-oxo-1H-inden-5-yl)oxy]butanoic acid), which plugs the channel like a cork in a bottle by binding in the extracellular selectivity filter and sterically occluding ion conduction. Lipids may block conduction in closed heterohexameric channels. In terms of biological role, essential component of the volume-regulated anion channel (VRAC, also named VSOAC channel), an anion channel required to maintain a constant cell volume in response to extracellular or intracellular osmotic changes. The VRAC channel conducts iodide better than chloride and can also conduct organic osmolytes like taurine. Mediates efflux of amino acids, such as aspartate and glutamate, in response to osmotic stress. In complex with LRRC8C or LRRC8E, acts as a transporter of immunoreactive cyclic dinucleotide GMP-AMP (2'-3'-cGAMP), an immune messenger produced in response to DNA virus in the cytosol: mediates both import and export of 2'-3'-cGAMP, thereby promoting transfer of 2'-3'-cGAMP to bystander cells. In contrast, complexes containing LRRC8D inhibit transport of 2'-3'-cGAMP. Required for in vivo channel activity, together with at least one other family member (LRRC8B, LRRC8C, LRRC8D or LRRC8E); channel characteristics depend on the precise subunit composition. Can form functional channels by itself (in vitro). Involved in B-cell development: required for the pro-B cell to pre-B cell transition. Also required for T-cell development. Required for myoblast differentiation: VRAC activity promotes membrane hyperpolarization and regulates insulin-stimulated glucose metabolism and oxygen consumption. Also acts as a regulator of glucose-sensing in pancreatic beta cells: VRAC currents, generated in response to hypotonicity- or glucose-induced beta cell swelling, depolarize cells, thereby causing electrical excitation, leading to increase glucose sensitivity and insulin secretion. Also plays a role in lysosome homeostasis by forming functional lysosomal VRAC channels in response to low cytoplasmic ionic strength condition: lysosomal VRAC channels are necessary for the formation of large lysosome-derived vacuoles, which store and then expel excess water to maintain cytosolic water homeostasis. Acts as a key factor in NLRP3 inflammasome activation by modulating itaconate efflux and mitochondria function. The protein is Volume-regulated anion channel subunit LRRC8A of Mus musculus (Mouse).